The primary structure comprises 529 residues: Cytochrome P450 monooxygenase CLM2 (529 aa).

The helical transmembrane segment at 2-19 threads the bilayer; the sequence is LLIIVVLVGTLIYFLSFH. N-linked (GlcNAc...) asparagine glycans are attached at residues asparagine 244 and asparagine 281. Position 438 (cysteine 438) interacts with heme.

This sequence belongs to the cytochrome P450 family. It depends on heme as a cofactor.

The protein localises to the membrane. The enzyme catalyses (-)-longiborneol + reduced [NADPH--hemoprotein reductase] + O2 = culmorin + oxidized [NADPH--hemoprotein reductase] + H2O + H(+). Its pathway is mycotoxin biosynthesis. In terms of biological role, cytochrome P450 monooxygenase involved in the biosynthesis of culmorin, a tricyclic sesquiterpene diol reported to have antifungal activity and some phytotoxicity to wheat coleoptile tissue, contributing to Fusarium head blight disease. The terpene cyclase CLM1 is responsible for the cyclization of farnesyl diphosphate into the intermediate longiborneol. Longiborneol is then hydroxylated in a regio- and endo-stereoselective manner at position C-11 by the cytochrome P450 monooxygenase CLM2 to produce culmorin. Additional non-specific oxygenases are also able to hydroxylate longiborneol at other sites than C-11 leading to 3-hydroxylongiborneol, 5-hydroxylongiborneol, 12-hydroxylongiborneol and 15-hydroxylongiborneol. Moreover, another oxygenase capable of installing a C-11 exo-hydroxy group in longiborneol can also yield 11-epi-acetylculmorin. The production of these longiborneol derivatives is dwarfed by the high abundance of culmorin, suggesting that CLM2 displays superior enzymatic activity to the unidentified, possibly promiscuous, additional oxygenases. This Gibberella zeae (strain ATCC MYA-4620 / CBS 123657 / FGSC 9075 / NRRL 31084 / PH-1) (Wheat head blight fungus) protein is Cytochrome P450 monooxygenase CLM2.